Consider the following 42-residue polypeptide: Potassium channel toxin gamma-KTx 1.5 (42 aa).

Cystine bridges form between cysteine 5–cysteine 23, cysteine 11–cysteine 34, cysteine 20–cysteine 39, and cysteine 24–cysteine 41.

Belongs to the ergtoxin family. Gamma-KTx 1 subfamily. Expressed by the venom gland.

The protein resides in the secreted. Functionally, blocks Kv11/ERG potassium channels. The protein is Potassium channel toxin gamma-KTx 1.5 of Centruroides limpidus (Mexican scorpion).